Reading from the N-terminus, the 223-residue chain is Deoxyribose-phosphate aldolase (223 aa).

Catalysis depends on Asp89, which acts as the Proton donor/acceptor. Catalysis depends on Lys154, which acts as the Schiff-base intermediate with acetaldehyde. Residue Lys183 is the Proton donor/acceptor of the active site.

It belongs to the DeoC/FbaB aldolase family. DeoC type 1 subfamily.

It localises to the cytoplasm. The catalysed reaction is 2-deoxy-D-ribose 5-phosphate = D-glyceraldehyde 3-phosphate + acetaldehyde. It participates in carbohydrate degradation; 2-deoxy-D-ribose 1-phosphate degradation; D-glyceraldehyde 3-phosphate and acetaldehyde from 2-deoxy-alpha-D-ribose 1-phosphate: step 2/2. Its function is as follows. Catalyzes a reversible aldol reaction between acetaldehyde and D-glyceraldehyde 3-phosphate to generate 2-deoxy-D-ribose 5-phosphate. In Thermoanaerobacter sp. (strain X514), this protein is Deoxyribose-phosphate aldolase.